Here is a 490-residue protein sequence, read N- to C-terminus: GTPase Der (490 aa).

Residues 1 to 165 form the EngA-type G 1 domain; that stretch reads MRIAILGRPN…RIRQVAEIPL (165 aa). GTP is bound by residues 7–14, 54–58, and 117–120; these read GRPNVGKS, DTGGV, and NKAD. The tract at residues 165–184 is disordered; sequence LPSAEEQENTQEEEFSSKES. The span at 169–178 shows a compositional bias: acidic residues; the sequence is EEQENTQEEE. One can recognise an EngA-type G 2 domain in the interval 227–400; it reads LKVALIGHPN…AVDDVYTIAT (174 aa). Residues 233–240, 280–284, and 345–348 each bind GTP; these read GHPNVGKS, DTAGL, and NKWD. The KH-like domain occupies 401 to 485; sequence TKLSTSLVNK…PFDLEYKAKP (85 aa).

It belongs to the TRAFAC class TrmE-Era-EngA-EngB-Septin-like GTPase superfamily. EngA (Der) GTPase family. Associates with the 50S ribosomal subunit.

Its function is as follows. GTPase that plays an essential role in the late steps of ribosome biogenesis. The protein is GTPase Der of Chlamydia muridarum (strain MoPn / Nigg).